Here is a 209-residue protein sequence, read N- to C-terminus: Uracil phosphoribosyltransferase (209 aa).

Residues Arg79, Arg104, and 131–139 each bind 5-phospho-alpha-D-ribose 1-diphosphate; that span reads DPMLATGGS. Uracil contacts are provided by residues Ile194 and 199–201; that span reads GDA. Asp200 contributes to the 5-phospho-alpha-D-ribose 1-diphosphate binding site.

The protein belongs to the UPRTase family. Mg(2+) is required as a cofactor.

It carries out the reaction UMP + diphosphate = 5-phospho-alpha-D-ribose 1-diphosphate + uracil. Its pathway is pyrimidine metabolism; UMP biosynthesis via salvage pathway; UMP from uracil: step 1/1. Allosterically activated by GTP. In terms of biological role, catalyzes the conversion of uracil and 5-phospho-alpha-D-ribose 1-diphosphate (PRPP) to UMP and diphosphate. In Streptococcus thermophilus (strain CNRZ 1066), this protein is Uracil phosphoribosyltransferase.